Reading from the N-terminus, the 842-residue chain is G-type lectin S-receptor-like serine/threonine-protein kinase At1g11330 (842 aa).

The first 29 residues, 1-29 (MVVSVTIRRRFVLLLLACTCLLSRRLCFG), serve as a signal peptide directing secretion. At 30–444 (EDRITFSSPI…AHSELKTHSN (415 aa)) the chain is on the extracellular side. One can recognise a Bulb-type lectin domain in the interval 32 to 157 (RITFSSPIKD…RNNGEILWES (126 aa)). N-linked (GlcNAc...) asparagine glycosylation is found at Asn63, Asn94, Asn122, Asn130, Asn196, and Asn260. In terms of domain architecture, EGF-like; atypical spans 294-330 (PYTDCDAYGRCGRFGSCHAGENPPCKCVKGFVPKNNT). Cystine bridges form between Cys298–Cys310 and Cys304–Cys318. Residues Asn328, Asn336, Asn354, and Asn396 are each glycosylated (N-linked (GlcNAc...) asparagine). Residues 349 to 435 (CERQRNVSNG…SGIDLFIRVA (87 aa)) enclose the PAN domain. Cystine bridges form between Cys389–Cys410 and Cys393–Cys399. Residues 445–465 (LAVMIAAPVIGVMLIAAVCVL) form a helical membrane-spanning segment. Over 466 to 842 (LACRKYKKRP…DVSLTAVTGR (377 aa)) the chain is Cytoplasmic. A Protein kinase domain is found at 524–810 (FSLRNKLGQG…SLADPKQPAF (287 aa)). ATP-binding positions include 530–538 (LGQGGFGPV) and Lys552. Phosphoserine occurs at positions 558 and 573. The caM-binding stretch occupies residues 613 to 630 (MKQKILDWKTRFNIMEGI). Asp649 acts as the Proton acceptor in catalysis. Phosphoserine is present on residues Ser653 and Ser666. Thr683 carries the phosphothreonine modification. A phosphoserine mark is found at Ser726, Ser727, Ser821, and Ser830. Residues 814-842 (RGASEAESSDQSSQKVSINDVSLTAVTGR) are disordered. A compositionally biased stretch (low complexity) spans 818–827 (EAESSDQSSQ). Over residues 828 to 842 (KVSINDVSLTAVTGR) the composition is skewed to polar residues. Phosphothreonine is present on Thr837.

This sequence belongs to the protein kinase superfamily. Ser/Thr protein kinase family.

The protein localises to the cell membrane. It carries out the reaction L-seryl-[protein] + ATP = O-phospho-L-seryl-[protein] + ADP + H(+). The catalysed reaction is L-threonyl-[protein] + ATP = O-phospho-L-threonyl-[protein] + ADP + H(+). The sequence is that of G-type lectin S-receptor-like serine/threonine-protein kinase At1g11330 from Arabidopsis thaliana (Mouse-ear cress).